The chain runs to 211 residues: MTRVALTSAVNLAKKLQEAGIRHPAVLKAISRTPRELFLDNALAHKAYENTALPIGQGQTISQPYIVARMTELLLQHQPQKVLEVGTGSGYQAAILAQLVPELCTIERIKGLQIQARQRLKRLDLHNVSFKYGDGWQGWPNRSPFDGIMVTAAAAKVPEALLSQLAEGGVLIIPVGEETQQLMRFTRRSDRFSSEVIETVKFVPLINGELA.

Ser62 is an active-site residue.

It belongs to the methyltransferase superfamily. L-isoaspartyl/D-aspartyl protein methyltransferase family.

Its subcellular location is the cytoplasm. The enzyme catalyses [protein]-L-isoaspartate + S-adenosyl-L-methionine = [protein]-L-isoaspartate alpha-methyl ester + S-adenosyl-L-homocysteine. In terms of biological role, catalyzes the methyl esterification of L-isoaspartyl residues in peptides and proteins that result from spontaneous decomposition of normal L-aspartyl and L-asparaginyl residues. It plays a role in the repair and/or degradation of damaged proteins. In Shewanella sp. (strain ANA-3), this protein is Protein-L-isoaspartate O-methyltransferase.